Consider the following 304-residue polypeptide: 33 kDa chaperonin (304 aa).

2 cysteine pairs are disulfide-bonded: cysteine 245–cysteine 247 and cysteine 278–cysteine 281.

The protein belongs to the HSP33 family. Post-translationally, under oxidizing conditions two disulfide bonds are formed involving the reactive cysteines. Under reducing conditions zinc is bound to the reactive cysteines and the protein is inactive.

It is found in the cytoplasm. In terms of biological role, redox regulated molecular chaperone. Protects both thermally unfolding and oxidatively damaged proteins from irreversible aggregation. Plays an important role in the bacterial defense system toward oxidative stress. The protein is 33 kDa chaperonin of Microcystis aeruginosa (strain NIES-843 / IAM M-2473).